Here is a 390-residue protein sequence, read N- to C-terminus: Glucose-fructose oxidoreductase domain-containing protein 1 (390 aa).

The signal sequence occupies residues Met-1–Leu-21.

This sequence belongs to the Gfo/Idh/MocA family. Homodimer. Interacts with NKIRAS2.

Its subcellular location is the secreted. Its function is as follows. Probably catalytically inactive enzyme. Does not bind NAD or NADP. In Mus musculus (Mouse), this protein is Glucose-fructose oxidoreductase domain-containing protein 1 (Gfod1).